We begin with the raw amino-acid sequence, 331 residues long: Laforin (331 aa).

Positions M1–L124 constitute a CBM20 domain. At S25 the chain carries Phosphoserine; by AMPK. Residues W32, K87, G103–D107, D197, D235, and R241 each bind substrate. The Tyrosine-protein phosphatase domain occupies H156–K323. C266 acts as the Phosphocysteine intermediate in catalysis. The Glucan phosphatase signature motif CXAGXGR motif lies at C266–R272. Substrate contacts are provided by residues N267–R272 and Y304.

The protein belongs to the protein-tyrosine phosphatase family. As to quaternary structure, homodimer. Interacts with itself. Interacts with PPP1R3B, PPP1R3C, PPP1R3D, HIRIP5, and EPM2AIP1. Binds glycogen and Lafora bodies. Interacts with NHLRC1/malin (via the NHL repeats). Forms a complex with NHLRC1/malin and HSP70. Interacts with PPP1R3D; in the presence of NHLC1/malin the interaction leads to ubiquitination and autophagic degradation of PPP1R3D. Interacts (via the phosphatase domain) with MAPT/Tau; the interaction dephosphorylates MAPT. Interacts with PRDM8. Polyubiquitinated by NHLRC1/malin. Post-translationally, phosphorylation on Ser-25 by AMPK affects the phosphatase activity of the enzyme and its ability to homodimerize and interact with NHLRC1, PPP1R3C or PRKAA2.

Its subcellular location is the cytoplasm. It localises to the endoplasmic reticulum membrane. The protein resides in the cell membrane. It carries out the reaction O-phospho-L-tyrosyl-[protein] + H2O = L-tyrosyl-[protein] + phosphate. The enzyme catalyses O-phospho-L-seryl-[protein] + H2O = L-seryl-[protein] + phosphate. The catalysed reaction is O-phospho-L-threonyl-[protein] + H2O = L-threonyl-[protein] + phosphate. Its function is as follows. Plays an important role in preventing glycogen hyperphosphorylation and the formation of insoluble aggregates, via its activity as glycogen phosphatase, and by promoting the ubiquitination of proteins involved in glycogen metabolism via its interaction with the E3 ubiquitin ligase NHLRC1/malin. Dephosphorylates phosphotyrosine and synthetic substrates, such as para-nitrophenylphosphate (pNPP), and has low activity with phosphoserine and phosphothreonine substrates (in vitro). Has also been shown to dephosphorylate MAPT. Shows strong phosphatase activity towards complex carbohydrates in vitro, avoiding glycogen hyperphosphorylation which is associated with reduced branching and formation of insoluble aggregates. Forms a complex with NHLRC1/malin and HSP70, which suppresses the cellular toxicity of misfolded proteins by promoting their degradation through the ubiquitin-proteasome system (UPS). Acts as a scaffold protein to facilitate PPP1R3C/PTG ubiquitination by NHLRC1/malin. Also promotes proteasome-independent protein degradation through the macroautophagy pathway. The sequence is that of Laforin (EPM2A) from Canis lupus familiaris (Dog).